The chain runs to 262 residues: Phosphonates import ATP-binding protein PhnC 3 (262 aa).

An ABC transporter domain is found at isoleucine 3–glutamate 245. Glycine 36 to serine 43 is a binding site for ATP.

This sequence belongs to the ABC transporter superfamily. Phosphonates importer (TC 3.A.1.9.1) family. In terms of assembly, the complex is composed of two ATP-binding proteins (PhnC), two transmembrane proteins (PhnE) and a solute-binding protein (PhnD).

It localises to the cell inner membrane. It catalyses the reaction phosphonate(out) + ATP + H2O = phosphonate(in) + ADP + phosphate + H(+). Part of the ABC transporter complex PhnCDE involved in phosphonates import. Responsible for energy coupling to the transport system. The protein is Phosphonates import ATP-binding protein PhnC 3 of Nostoc sp. (strain PCC 7120 / SAG 25.82 / UTEX 2576).